Here is a 291-residue protein sequence, read N- to C-terminus: Phytanoyl-CoA dioxygenase domain-containing protein 1 (291 aa).

Position 55 is a phosphothreonine (threonine 55). 2-oxoglutarate-binding positions include lysine 102, methionine 141, histidine 156 to aspartate 158, and tryptophan 174. Fe cation is bound by residues histidine 156 and aspartate 158. Residue histidine 246 participates in Fe cation binding. 2-oxoglutarate is bound by residues serine 248 and arginine 257.

The protein belongs to the PhyH family. PHYHD1 subfamily. Fe cation serves as cofactor.

Functionally, 2-oxoglutarate(2OG)-dependent dioxygenase that catalyzes the conversion of 2-oxoglutarate to succinate and CO(2) in an iron-dependent manner. However, does not couple 2OG turnover to the hydroxylation of acyl-coenzyme A derivatives, implying that it is not directly involved in phytanoyl coenzyme-A metabolism. Does not show detectable activity towards fatty acid CoA thioesters. The polypeptide is Phytanoyl-CoA dioxygenase domain-containing protein 1 (Mus musculus (Mouse)).